The following is a 298-amino-acid chain: HTH-type transcriptional regulator ArgP (298 aa).

An HTH lysR-type domain is found at L4–T60. The segment at residues F21 to K40 is a DNA-binding region (H-T-H motif).

The protein belongs to the LysR transcriptional regulatory family. In terms of assembly, homodimer.

Functionally, controls the transcription of genes involved in arginine and lysine metabolism. This is HTH-type transcriptional regulator ArgP from Vibrio vulnificus (strain YJ016).